The sequence spans 226 residues: TPD1 protein homolog 1A (226 aa).

The N-terminal stretch at 1–35 (MRVSSASSTPPPPAFAAAAWAVVLLAMLRSDVALA) is a signal peptide.

As to quaternary structure, interacts with MSP1. As to expression, expressed in roots, and anthers and ovules during meiosis.

Involved in cell specification during anther development. Required for the differentiation of primary parietal cells into secondary parietal cells in anthers. May serve as an extracellular ligand for the MSP1 receptor kinase to limit sporocyte number in ovules. The chain is TPD1 protein homolog 1A from Oryza sativa subsp. japonica (Rice).